Reading from the N-terminus, the 39-residue chain is Cytochrome b6-f complex subunit 5 (39 aa).

A helical transmembrane segment spans residues 5-25; that stretch reads LLCGIVLGLVPITLLGLFVAA.

The protein belongs to the PetG family. As to quaternary structure, the 4 large subunits of the cytochrome b6-f complex are cytochrome b6, subunit IV (17 kDa polypeptide, PetD), cytochrome f and the Rieske protein, while the 4 small subunits are PetG, PetL, PetM and PetN. The complex functions as a dimer.

The protein resides in the cellular thylakoid membrane. Its function is as follows. Component of the cytochrome b6-f complex, which mediates electron transfer between photosystem II (PSII) and photosystem I (PSI), cyclic electron flow around PSI, and state transitions. PetG is required for either the stability or assembly of the cytochrome b6-f complex. In Prochlorococcus marinus (strain SARG / CCMP1375 / SS120), this protein is Cytochrome b6-f complex subunit 5.